Reading from the N-terminus, the 307-residue chain is MKKGVMRPGHVQLRVLNLESALAHYRDLLGLIEMDRDEQGRVYLKAWTEVDKFSVVLREADQPGMDFMGFKVIDEDCLNRLTQDLLNYGCLIETIPAGELKGCGRRVRFQTPSGHFFELYADKEYTGKWGLEEINPEAWPRNLKGMRAVRFDHCLLYGDELQATYALFTEVLGFYLAEQVIDDDGTRVAQFLSLSTKAHDVAFIHCPEKGKFHHVSFFLETWEDVLRAADLISMTDTSIDIGPTRHGLTHGKTIYFFDPSGNRNEVFCGGDYNYQDHKPVTWLAKDLGKAIFYHDRVLNERFLTVLT.

2 VOC domains span residues 7 to 122 (RPGH…LYAD) and 150 to 269 (RFDH…VFCG). H153, H214, and E265 together coordinate Fe cation.

It belongs to the extradiol ring-cleavage dioxygenase family. In terms of assembly, homotetramer. The cofactor is Fe(2+).

The catalysed reaction is catechol + O2 = (2Z,4E)-2-hydroxy-6-oxohexa-2,4-dienoate + H(+). The protein operates within aromatic compound metabolism; benzoate degradation via hydroxylation. This Pseudomonas sp. (strain CF600) protein is Metapyrocatechase (dmpB).